The sequence spans 427 residues: Gamma-glutamyl phosphate reductase (427 aa).

The protein belongs to the gamma-glutamyl phosphate reductase family.

The protein resides in the cytoplasm. It carries out the reaction L-glutamate 5-semialdehyde + phosphate + NADP(+) = L-glutamyl 5-phosphate + NADPH + H(+). It functions in the pathway amino-acid biosynthesis; L-proline biosynthesis; L-glutamate 5-semialdehyde from L-glutamate: step 2/2. Catalyzes the NADPH-dependent reduction of L-glutamate 5-phosphate into L-glutamate 5-semialdehyde and phosphate. The product spontaneously undergoes cyclization to form 1-pyrroline-5-carboxylate. The chain is Gamma-glutamyl phosphate reductase from Rhodospirillum rubrum (strain ATCC 11170 / ATH 1.1.1 / DSM 467 / LMG 4362 / NCIMB 8255 / S1).